We begin with the raw amino-acid sequence, 466 residues long: Adenosylhomocysteinase (466 aa).

3 residues coordinate substrate: Thr57, Asp132, and Glu192. Position 193–195 (193–195 (TTT)) interacts with NAD(+). 2 residues coordinate substrate: Lys222 and Asp226. NAD(+) is bound by residues Asn227, 256–261 (GYGDVG), Glu279, Asn314, 335–337 (IGH), and Asn380.

It belongs to the adenosylhomocysteinase family. It depends on NAD(+) as a cofactor.

Its subcellular location is the cytoplasm. It catalyses the reaction S-adenosyl-L-homocysteine + H2O = L-homocysteine + adenosine. It participates in amino-acid biosynthesis; L-homocysteine biosynthesis; L-homocysteine from S-adenosyl-L-homocysteine: step 1/1. Its function is as follows. May play a key role in the regulation of the intracellular concentration of adenosylhomocysteine. This is Adenosylhomocysteinase from Rhizobium rhizogenes (strain K84 / ATCC BAA-868) (Agrobacterium radiobacter).